A 147-amino-acid chain; its full sequence is Small ribosomal subunit protein uS12 (147 aa).

It belongs to the universal ribosomal protein uS12 family. In terms of assembly, part of the 30S ribosomal subunit.

In terms of biological role, with S4 and S5 plays an important role in translational accuracy. Located at the interface of the 30S and 50S subunits. The sequence is that of Small ribosomal subunit protein uS12 from Ignicoccus hospitalis (strain KIN4/I / DSM 18386 / JCM 14125).